Reading from the N-terminus, the 975-residue chain is Glycine dehydrogenase (decarboxylating) (975 aa).

N6-(pyridoxal phosphate)lysine is present on Lys-723.

The protein belongs to the GcvP family. The glycine cleavage system is composed of four proteins: P, T, L and H. It depends on pyridoxal 5'-phosphate as a cofactor.

The enzyme catalyses N(6)-[(R)-lipoyl]-L-lysyl-[glycine-cleavage complex H protein] + glycine + H(+) = N(6)-[(R)-S(8)-aminomethyldihydrolipoyl]-L-lysyl-[glycine-cleavage complex H protein] + CO2. Its function is as follows. The glycine cleavage system catalyzes the degradation of glycine. The P protein binds the alpha-amino group of glycine through its pyridoxal phosphate cofactor; CO(2) is released and the remaining methylamine moiety is then transferred to the lipoamide cofactor of the H protein. The chain is Glycine dehydrogenase (decarboxylating) from Burkholderia vietnamiensis (strain G4 / LMG 22486) (Burkholderia cepacia (strain R1808)).